A 186-amino-acid polypeptide reads, in one-letter code: Adenylate kinase (186 aa).

10-15 (GVGKGT) lines the ATP pocket. The interval 30-59 (STGDIFRYNIKNKTELGLEAMSYTDKGELV) is NMP. AMP contacts are provided by residues Thr-31, Arg-36, 57 to 59 (ELV), 85 to 88 (GYPR), and Gln-92. The LID stretch occupies residues 126–136 (KRAAEQGRADD). Arg-127 provides a ligand contact to ATP. Arg-133 and Arg-144 together coordinate AMP. Position 172 (Gly-172) interacts with ATP.

Belongs to the adenylate kinase family. Monomer.

The protein resides in the cytoplasm. The catalysed reaction is AMP + ATP = 2 ADP. The protein operates within purine metabolism; AMP biosynthesis via salvage pathway; AMP from ADP: step 1/1. Its function is as follows. Catalyzes the reversible transfer of the terminal phosphate group between ATP and AMP. Plays an important role in cellular energy homeostasis and in adenine nucleotide metabolism. The chain is Adenylate kinase from Bifidobacterium longum (strain NCC 2705).